A 545-amino-acid chain; its full sequence is CTP synthase (545 aa).

Residues 1-266 (MKTNYIFVTG…DDYICKRFSL (266 aa)) form an amidoligase domain region. Ser-14 is a CTP binding site. Ser-14 contacts UTP. Residues 15–20 (SLGKGI) and Asp-72 each bind ATP. Mg(2+)-binding residues include Asp-72 and Glu-140. CTP contacts are provided by residues 147–149 (DIE), 187–192 (KTKPTQ), and Lys-223. Residues 187-192 (KTKPTQ) and Lys-223 contribute to the UTP site. Residue 239-241 (KDV) participates in ATP binding. One can recognise a Glutamine amidotransferase type-1 domain in the interval 291–542 (TIGMVGKYVE…VKAAFDYQKG (252 aa)). Position 352 (Gly-352) interacts with L-glutamine. Cys-379 serves as the catalytic Nucleophile; for glutamine hydrolysis. Residues 380–383 (LGMQ), Glu-403, and Arg-470 each bind L-glutamine. Residues His-515 and Glu-517 contribute to the active site.

It belongs to the CTP synthase family. Homotetramer.

The catalysed reaction is UTP + L-glutamine + ATP + H2O = CTP + L-glutamate + ADP + phosphate + 2 H(+). It carries out the reaction L-glutamine + H2O = L-glutamate + NH4(+). The enzyme catalyses UTP + NH4(+) + ATP = CTP + ADP + phosphate + 2 H(+). It functions in the pathway pyrimidine metabolism; CTP biosynthesis via de novo pathway; CTP from UDP: step 2/2. Its activity is regulated as follows. Allosterically activated by GTP, when glutamine is the substrate; GTP has no effect on the reaction when ammonia is the substrate. The allosteric effector GTP functions by stabilizing the protein conformation that binds the tetrahedral intermediate(s) formed during glutamine hydrolysis. Inhibited by the product CTP, via allosteric rather than competitive inhibition. In terms of biological role, catalyzes the ATP-dependent amination of UTP to CTP with either L-glutamine or ammonia as the source of nitrogen. Regulates intracellular CTP levels through interactions with the four ribonucleotide triphosphates. This is CTP synthase from Proteus mirabilis (strain HI4320).